The chain runs to 197 residues: GTP cyclohydrolase-2 (197 aa).

Position 50–54 (50–54 (RIHSE)) interacts with GTP. Zn(2+) is bound by residues Cys-55, Cys-66, and Cys-68. Residues Gln-71, 93 to 95 (EGR), and Thr-115 each bind GTP. Asp-127 acts as the Proton acceptor in catalysis. The Nucleophile role is filled by Arg-129. Residues Thr-150 and Lys-155 each coordinate GTP.

Belongs to the GTP cyclohydrolase II family. The cofactor is Zn(2+).

It carries out the reaction GTP + 4 H2O = 2,5-diamino-6-hydroxy-4-(5-phosphoribosylamino)-pyrimidine + formate + 2 phosphate + 3 H(+). It functions in the pathway cofactor biosynthesis; riboflavin biosynthesis; 5-amino-6-(D-ribitylamino)uracil from GTP: step 1/4. In terms of biological role, catalyzes the conversion of GTP to 2,5-diamino-6-ribosylamino-4(3H)-pyrimidinone 5'-phosphate (DARP), formate and pyrophosphate. The sequence is that of GTP cyclohydrolase-2 from Neisseria meningitidis serogroup A / serotype 4A (strain DSM 15465 / Z2491).